The sequence spans 196 residues: Pyridoxal 5'-phosphate synthase subunit PdxT (196 aa).

46 to 48 (GES) is an L-glutamine binding site. Cys78 (nucleophile) is an active-site residue. Residues Arg105 and 133–134 (IR) contribute to the L-glutamine site. Residues His169 and Glu171 each act as charge relay system in the active site.

Belongs to the glutaminase PdxT/SNO family. In terms of assembly, in the presence of PdxS, forms a dodecamer of heterodimers. Only shows activity in the heterodimer.

The catalysed reaction is aldehydo-D-ribose 5-phosphate + D-glyceraldehyde 3-phosphate + L-glutamine = pyridoxal 5'-phosphate + L-glutamate + phosphate + 3 H2O + H(+). It catalyses the reaction L-glutamine + H2O = L-glutamate + NH4(+). It functions in the pathway cofactor biosynthesis; pyridoxal 5'-phosphate biosynthesis. In terms of biological role, catalyzes the hydrolysis of glutamine to glutamate and ammonia as part of the biosynthesis of pyridoxal 5'-phosphate. The resulting ammonia molecule is channeled to the active site of PdxS. This chain is Pyridoxal 5'-phosphate synthase subunit PdxT, found in Geobacillus kaustophilus (strain HTA426).